Consider the following 577-residue polypeptide: Vacuolar protein sorting-associated protein 45 (577 aa).

This sequence belongs to the STXBP/unc-18/SEC1 family. As to quaternary structure, interacts with PEP7 and TLG2.

Its subcellular location is the cytoplasm. The protein localises to the vacuole membrane. Its function is as follows. Essential for vacuolar protein sorting. Function in membrane traffic between the Golgi and the vacuole. The polypeptide is Vacuolar protein sorting-associated protein 45 (VPS45) (Saccharomyces cerevisiae (strain ATCC 204508 / S288c) (Baker's yeast)).